A 142-amino-acid chain; its full sequence is uncharacterized protein (142 aa).

This sequence belongs to the IIV-6 115R family.

This is an uncharacterized protein from Invertebrate iridescent virus 3 (IIV-3).